We begin with the raw amino-acid sequence, 344 residues long: UDP-N-acetylenolpyruvoylglucosamine reductase (344 aa).

The FAD-binding PCMH-type domain occupies 19 to 189; sequence INVTAKKIIF…IAVGIKIKKN (171 aa). R165 is a catalytic residue. Catalysis depends on S235, which acts as the Proton donor. Residue E331 is part of the active site.

It belongs to the MurB family. FAD is required as a cofactor.

It is found in the cytoplasm. The enzyme catalyses UDP-N-acetyl-alpha-D-muramate + NADP(+) = UDP-N-acetyl-3-O-(1-carboxyvinyl)-alpha-D-glucosamine + NADPH + H(+). Its pathway is cell wall biogenesis; peptidoglycan biosynthesis. Functionally, cell wall formation. The protein is UDP-N-acetylenolpyruvoylglucosamine reductase of Buchnera aphidicola subsp. Schizaphis graminum (strain Sg).